A 199-amino-acid chain; its full sequence is 7-methyl-GTP pyrophosphatase (199 aa).

Asp-76 serves as the catalytic Proton acceptor.

It belongs to the Maf family. YceF subfamily. A divalent metal cation serves as cofactor.

Its subcellular location is the cytoplasm. It catalyses the reaction N(7)-methyl-GTP + H2O = N(7)-methyl-GMP + diphosphate + H(+). Its function is as follows. Nucleoside triphosphate pyrophosphatase that hydrolyzes 7-methyl-GTP (m(7)GTP). May have a dual role in cell division arrest and in preventing the incorporation of modified nucleotides into cellular nucleic acids. The polypeptide is 7-methyl-GTP pyrophosphatase (Rhizobium meliloti (strain 1021) (Ensifer meliloti)).